Reading from the N-terminus, the 477-residue chain is ETS translocation variant 1 (477 aa).

Ser-94 bears the Phosphoserine mark. Residues 128-179 (PQVGMRPSNPPTPSSTPVSPLHHASPNSTHTPKPDRAFPAHLPPSQSIPDSS) form a disordered region. Phosphoserine; by RPS6KA1 and RPS6KA5 is present on residues Ser-191 and Ser-216. A Glycyl lysine isopeptide (Lys-Gly) (interchain with G-Cter in SUMO2) cross-link involves residue Lys-317. Positions 335-415 (LQLWQFLVAL…AGERYVYKFV (81 aa)) form a DNA-binding region, ETS.

The protein belongs to the ETS family. Sumoylated. Post-translationally, phosphorylated at Ser-191 and Ser-216 by RPS6KA1 and RPS6KA5; phosphorylation activates transcriptional activity. As to expression, very highly expressed in brain, highly expressed in testis, lung and heart, moderately in spleen, small intestine, pancreas and colon, weakly in liver, prostate and thymus, very weakly in skeletal muscle, kidney and ovary and not in placenta and peripheral blood leukocytes.

It localises to the nucleus. Its function is as follows. Transcriptional activator that binds to DNA sequences containing the consensus pentanucleotide 5'-CGGA[AT]-3'. Required for olfactory dopaminergic neuron differentiation; may directly activate expression of tyrosine hydroxylase (TH). This is ETS translocation variant 1 from Homo sapiens (Human).